Reading from the N-terminus, the 894-residue chain is Translation factor GUF1 homolog, mitochondrial (894 aa).

The tract at residues 157-189 is disordered; sequence EDEGLDGGPPPGMEAKKSSSSSSSNNVHSNCSD. Positions 174–188 are enriched in low complexity; the sequence is SSSSSSSNNVHSNCS. Residues 199-376 enclose the tr-type G domain; it reads ENIRNFCILA…RIVSEIPSPA (178 aa). GTP-binding positions include 208–215, 269–273, and 323–326; these read AHIDSGKS, DTPGH, and NKID. Residues 649–674 are disordered; sequence DHDDCNDNGGSNSDDRSDRSGKNPPD.

This sequence belongs to the TRAFAC class translation factor GTPase superfamily. Classic translation factor GTPase family. LepA subfamily.

The protein localises to the mitochondrion inner membrane. It catalyses the reaction GTP + H2O = GDP + phosphate + H(+). In terms of biological role, promotes mitochondrial protein synthesis. May act as a fidelity factor of the translation reaction, by catalyzing a one-codon backward translocation of tRNAs on improperly translocated ribosomes. Binds to mitochondrial ribosomes in a GTP-dependent manner. This Plasmodium knowlesi (strain H) protein is Translation factor GUF1 homolog, mitochondrial.